The primary structure comprises 299 residues: MHSLATAAPVPTTLAQVDREKIYQWINELSSPETRENALLELSKKRESVPDLAPMLWHSFGTIAALLQEIVNIYPSINPPTLTAHQSNRVCNALALLQCVASHPETRSAFLAAHIPLFLYPFLHTVSKTRPFEYLRLTSLGVIGALVKTDEQEVINFLLTTEIIPLCLRIMESGSELSKTVATFILQKILLDDTGLAYICQTYERFSHVAMILGKMVLQLSKEPSARLLKHVVRCYLRLSDNPRAREALRQCLPDQLKDTTFAQVLKDDTTTKRWLAQLVKNLQEGQVTDPRGIPLPPQ.

Methionine 1 is modified (N-acetylmethionine).

This sequence belongs to the CNOT9 family. Homodimer. Component of the CCR4-NOT complex; distinct complexes seem to exist that differ in the participation of probably mutually exclusive catalytic subunits. Interacts with MYB, ATF2, RARA, RARB, RARG, RXRA, RXRB and RXRG. Identified in a complex with ATF2 bound to target DNA. Interacts with NANOS2. Directly interacts with ZNF335. As to expression, detected in spleen, thymus, prostate, testis, ovary and intestine.

It is found in the nucleus. Its subcellular location is the cytoplasm. The protein localises to the P-body. Component of the CCR4-NOT complex which is one of the major cellular mRNA deadenylases and is linked to various cellular processes including bulk mRNA degradation, miRNA-mediated repression, translational repression during translational initiation and general transcription regulation. Additional complex functions may be a consequence of its influence on mRNA expression. Involved in down-regulation of MYB- and JUN-dependent transcription. May play a role in cell differentiation. Can bind oligonucleotides, such as poly-G, poly-C or poly-T (in vitro), but the physiological relevance of this is not certain. Does not bind poly-A. Enhances ligand-dependent transcriptional activity of nuclear hormone receptors, including RARA, expect ESR1-mediated transcription that is not only slightly increased, if at all. The chain is CCR4-NOT transcription complex subunit 9 from Homo sapiens (Human).